The chain runs to 359 residues: Peptide chain release factor 1 (359 aa).

Gln-236 bears the N5-methylglutamine mark.

This sequence belongs to the prokaryotic/mitochondrial release factor family. Methylated by PrmC. Methylation increases the termination efficiency of RF1.

The protein localises to the cytoplasm. Its function is as follows. Peptide chain release factor 1 directs the termination of translation in response to the peptide chain termination codons UAG and UAA. The polypeptide is Peptide chain release factor 1 (Streptococcus pneumoniae serotype 2 (strain D39 / NCTC 7466)).